The primary structure comprises 110 residues: ATP-dependent Clp protease adapter protein ClpS (110 aa).

Belongs to the ClpS family. As to quaternary structure, binds to the N-terminal domain of the chaperone ClpA.

Involved in the modulation of the specificity of the ClpAP-mediated ATP-dependent protein degradation. The sequence is that of ATP-dependent Clp protease adapter protein ClpS from Bartonella quintana (strain Toulouse) (Rochalimaea quintana).